Consider the following 230-residue polypeptide: MSFKNLVPVITIDGPSGVGKSSVCKVISKKLQWNVLESGWIYRVLAFIIFKNNVCFSSRNLNILFKNINLHDFIQRINFKNYVISQSLFTNISQEYIGNLASRLACIPYIRHFLLFQQRSFRKFPGLIANGRDMGTVVFPDAIIKFFLISDFKTRVARRCLEYEKKGINSCNYKKIFYDMKTRDQRDHNRKISPLIPAKNAILIDSTYMSLKQVSNVLLSYILKMQKFKL.

14–22 provides a ligand contact to ATP; it reads GPSGVGKSS.

Belongs to the cytidylate kinase family. Type 1 subfamily.

The protein localises to the cytoplasm. It carries out the reaction CMP + ATP = CDP + ADP. The catalysed reaction is dCMP + ATP = dCDP + ADP. This Buchnera aphidicola subsp. Baizongia pistaciae (strain Bp) protein is Cytidylate kinase.